Here is a 203-residue protein sequence, read N- to C-terminus: Large ribosomal subunit protein uL13 (203 aa).

Ala-2 carries the post-translational modification N-acetylalanine. The residue at position 59 (Arg-59) is a Citrulline. A Phosphoserine modification is found at Ser-77. The residue at position 140 (Arg-140) is a Citrulline. An N6-acetyllysine modification is found at Lys-191.

The protein belongs to the universal ribosomal protein uL13 family. Component of the 60S ribosome. Component of the GAIT complex. Interacts with EIF4G1. Post-translationally, phosphorylation at Ser-77 upon interferon-gamma treatment in macrophages involves a DAPK1-DAPK3 kinase cascade and is causing release from the ribosome, association with the GAIT complex and subsequent involvement in transcript-selective translation inhibition. In terms of processing, citrullinated by PADI4.

Its subcellular location is the cytoplasm. Functionally, associated with ribosomes but is not required for canonical ribosome function and has extra-ribosomal functions. Component of the GAIT (gamma interferon-activated inhibitor of translation) complex which mediates interferon-gamma-induced transcript-selective translation inhibition in inflammation processes. Upon interferon-gamma activation and subsequent phosphorylation dissociates from the ribosome and assembles into the GAIT complex which binds to stem loop-containing GAIT elements in the 3'-UTR of diverse inflammatory mRNAs (such as ceruplasmin) and suppresses their translation. In the GAIT complex interacts with m7G cap-bound eIF4G at or near the eIF3-binding site and blocks the recruitment of the 43S ribosomal complex. Involved in methylation of rRNA. This chain is Large ribosomal subunit protein uL13 (RPL13A), found in Canis lupus familiaris (Dog).